The following is a 67-amino-acid chain: Surface composition regulator (67 aa).

Belongs to the GlgS family.

In terms of biological role, major determinant of cell surface composition. Negatively regulates motility, adhesion and synthesis of biofilm exopolysaccharides. The protein is Surface composition regulator of Salmonella enteritidis PT4 (strain P125109).